The sequence spans 161 residues: Cyclic pyranopterin monophosphate synthase (161 aa).

Substrate contacts are provided by residues 75–77 (LCH) and 113–114 (ME). Residue Asp128 is part of the active site.

Belongs to the MoaC family. Homohexamer; trimer of dimers.

The enzyme catalyses (8S)-3',8-cyclo-7,8-dihydroguanosine 5'-triphosphate = cyclic pyranopterin phosphate + diphosphate. It participates in cofactor biosynthesis; molybdopterin biosynthesis. In terms of biological role, catalyzes the conversion of (8S)-3',8-cyclo-7,8-dihydroguanosine 5'-triphosphate to cyclic pyranopterin monophosphate (cPMP). This Cupriavidus pinatubonensis (strain JMP 134 / LMG 1197) (Cupriavidus necator (strain JMP 134)) protein is Cyclic pyranopterin monophosphate synthase.